The following is a 168-amino-acid chain: Endoribonuclease YbeY (168 aa).

Zn(2+) is bound by residues His125, His129, and His135.

The protein belongs to the endoribonuclease YbeY family. Zn(2+) serves as cofactor.

It localises to the cytoplasm. Functionally, single strand-specific metallo-endoribonuclease involved in late-stage 70S ribosome quality control and in maturation of the 3' terminus of the 16S rRNA. This chain is Endoribonuclease YbeY, found in Rhodopseudomonas palustris (strain BisB18).